The chain runs to 438 residues: Dolichyl-diphosphooligosaccharide--protein glycosyltransferase 48 kDa subunit (438 aa).

The N-terminal stretch at 1 to 25 (MASLRLSVLLVSVSWLLLLVSGLRA) is a signal peptide. The Lumenal portion of the chain corresponds to 26 to 408 (GPRTLVLMEN…QYERFIPSAY (383 aa)). Residues 409 to 429 (PYYASAFSVMFGLFIFSIVFL) form a helical membrane-spanning segment. At 430-438 (HMKEKEKSD) the chain is on the cytoplasmic side.

Belongs to the DDOST 48 kDa subunit family. As to quaternary structure, component of the oligosaccharyltransferase (OST) complex.

The protein resides in the endoplasmic reticulum membrane. It participates in protein modification; protein glycosylation. Functionally, subunit of the oligosaccharyl transferase (OST) complex that catalyzes the initial transfer of a defined glycan (Glc(3)Man(9)GlcNAc(2) in eukaryotes) from the lipid carrier dolichol-pyrophosphate to an asparagine residue within an Asn-X-Ser/Thr consensus motif in nascent polypeptide chains, the first step in protein N-glycosylation. N-glycosylation occurs cotranslationally and the complex associates with the Sec61 complex at the channel-forming translocon complex that mediates protein translocation across the endoplasmic reticulum (ER). All subunits are required for a maximal enzyme activity. Required for the assembly of both SST3A- and SS3B-containing OST complexes. This Xenopus laevis (African clawed frog) protein is Dolichyl-diphosphooligosaccharide--protein glycosyltransferase 48 kDa subunit.